The primary structure comprises 428 residues: Putative G-protein coupled receptor F59B2.13 (428 aa).

Residues 1–30 (MSNNTTIPSKTATDICLTDRQMSLSVSSTE) are Extracellular-facing. 2 N-linked (GlcNAc...) asparagine glycosylation sites follow: Asn3 and Asn4. A helical membrane pass occupies residues 31-51 (GVLIGTIIPILVLFGISGNIL). The Cytoplasmic segment spans residues 52–67 (NLTVLLAPNLRTRSNQ). The chain crosses the membrane as a helical span at residues 68 to 88 (LLACLAVADIVSLVVILPHSM). The Extracellular segment spans residues 89 to 110 (AHYETFETALWFRKFYGKYKFQ). A helical transmembrane segment spans residues 111 to 131 (IIAMTNWSIATATWLVFVICL). The Cytoplasmic segment spans residues 132-154 (ERLIIIKYPLSVRKQAKFFTPRN). A helical transmembrane segment spans residues 155–175 (VVTIIVVTTFILTSYNHVSHA). At 176-222 (CAEKLFCNGTQYHVACLGIDSERWFRNEPNPNSEFMKSVVRVAPQVN) the chain is on the extracellular side. Residue Asn183 is glycosylated (N-linked (GlcNAc...) asparagine). The chain crosses the membrane as a helical span at residues 223–243 (AIFVVLIPVVLVIIFNVMLIL). The Cytoplasmic segment spans residues 244 to 278 (TLRQRTKLFEPSKTIRGDSQFTQLQSKTEHKVTIT). The helical transmembrane segment at 279–299 (VTAIVTCFTITQSPSAFVTFL) threads the bilayer. At 300-309 (SSYVHRDWVT) the chain is on the extracellular side. A helical membrane pass occupies residues 310–330 (LSAICTILVVLGKALNFVLFC). Topologically, residues 331 to 428 (LSSASFRQRL…KEFRRGTSFV (98 aa)) are cytoplasmic.

Belongs to the G-protein coupled receptor 1 family.

Its subcellular location is the cell membrane. The chain is Putative G-protein coupled receptor F59B2.13 from Caenorhabditis elegans.